Reading from the N-terminus, the 167-residue chain is Phosphopantetheine adenylyltransferase (167 aa).

Ser11 provides a ligand contact to substrate. Residues Ser11 to Phe12 and His19 contribute to the ATP site. 3 residues coordinate substrate: Lys43, Thr76, and Arg90. ATP contacts are provided by residues Gly91–Arg93, Glu101, and Tyr126–Thr132.

This sequence belongs to the bacterial CoaD family. As to quaternary structure, homohexamer. Mg(2+) serves as cofactor.

The protein localises to the cytoplasm. It catalyses the reaction (R)-4'-phosphopantetheine + ATP + H(+) = 3'-dephospho-CoA + diphosphate. It participates in cofactor biosynthesis; coenzyme A biosynthesis; CoA from (R)-pantothenate: step 4/5. Its function is as follows. Reversibly transfers an adenylyl group from ATP to 4'-phosphopantetheine, yielding dephospho-CoA (dPCoA) and pyrophosphate. This Lacticaseibacillus paracasei (strain ATCC 334 / BCRC 17002 / CCUG 31169 / CIP 107868 / KCTC 3260 / NRRL B-441) (Lactobacillus paracasei) protein is Phosphopantetheine adenylyltransferase.